Consider the following 556-residue polypeptide: MKNDIEIAQSAKMEPIINIAKKIGLGEDDIELYGKYKCKISLDAIKKLENNKDGKLVLVTAINPTPAGEGKSTVTVGLGQALNKIGKNTVIALREPSLGPVFGIKGGAAGGGYAQVVPMEDINLHFTGDMHAITSANNLLCAAIDNHIHQGNLLRIDSRRIVFKRVMDMNDRALRNIVVGMGGKINGFLREDGFMITVASEIMAILCMASDLEDLKERMGNILIAYNLDGEPVYAKELEVQGAMALLMKDAIKPNLVQTLENTPAIIHGGPFANIAHGCNSIIATKTALKMSDITITEAGFGADLGAEKFLDIKCRYGNLNPDCVVLVATIRALKHHGGVKKDELNISNVDALNKGMKNLEKQIENIKAYGVPVVVAINKFITDSDEEVKAIEDFCKNIGVEVSLTEVWEKGGEGGIDLANKVIKTMETEPSNFKMIYDSEESINDKILKIVQTIYGGKGVNYTPQALKQIAEIEKFNLDKLPICMAKTQYSLSDNPSLLGRPENFDITVREVRVSNGAGFIVVLTGDVMTMPGLPKVPAANRMDIKDNGEIVGLF.

65–72 (TPAGEGKS) provides a ligand contact to ATP.

Belongs to the formate--tetrahydrofolate ligase family.

It carries out the reaction (6S)-5,6,7,8-tetrahydrofolate + formate + ATP = (6R)-10-formyltetrahydrofolate + ADP + phosphate. Its pathway is one-carbon metabolism; tetrahydrofolate interconversion. This chain is Formate--tetrahydrofolate ligase, found in Clostridium perfringens (strain ATCC 13124 / DSM 756 / JCM 1290 / NCIMB 6125 / NCTC 8237 / Type A).